The chain runs to 76 residues: Putative UPF0377 protein YGL260W (76 aa).

The protein belongs to the UPF0377 family.

The polypeptide is Putative UPF0377 protein YGL260W (Saccharomyces cerevisiae (strain ATCC 204508 / S288c) (Baker's yeast)).